The primary structure comprises 272 residues: 4-hydroxy-tetrahydrodipicolinate reductase (272 aa).

NAD(+)-binding positions include 10 to 15 (GAGGRM), Glu-36, 100 to 102 (GTT), and 124 to 127 (SGNM). His-157 functions as the Proton donor/acceptor in the catalytic mechanism. (S)-2,3,4,5-tetrahydrodipicolinate is bound at residue His-158. The Proton donor role is filled by Lys-161. 167-168 (GT) is a (S)-2,3,4,5-tetrahydrodipicolinate binding site.

It belongs to the DapB family.

Its subcellular location is the cytoplasm. The catalysed reaction is (S)-2,3,4,5-tetrahydrodipicolinate + NAD(+) + H2O = (2S,4S)-4-hydroxy-2,3,4,5-tetrahydrodipicolinate + NADH + H(+). It catalyses the reaction (S)-2,3,4,5-tetrahydrodipicolinate + NADP(+) + H2O = (2S,4S)-4-hydroxy-2,3,4,5-tetrahydrodipicolinate + NADPH + H(+). It participates in amino-acid biosynthesis; L-lysine biosynthesis via DAP pathway; (S)-tetrahydrodipicolinate from L-aspartate: step 4/4. Its function is as follows. Catalyzes the conversion of 4-hydroxy-tetrahydrodipicolinate (HTPA) to tetrahydrodipicolinate. In Bradyrhizobium sp. (strain ORS 278), this protein is 4-hydroxy-tetrahydrodipicolinate reductase.